A 354-amino-acid chain; its full sequence is MRSLLFLVLISVCRADHLSDSYTPDQDRVIHIQAENGPRLLVEAEQAKVFSHRGGNVTLPCKFYRDPTAFGSGIHKIRIKWTKLTSDYLREVDVFVSMGYHKKTYGGYQGRVFLKGGSDNDASLIITDLTLEDYGRYKCEVIEGLEDDTAVVALELQGVVFPYFPRLGRYNLNFHEARQACLDQDAVIASFDQLYDAWRGGLDWCNAGWLSDGSVQYPITKPREPCGGQNTVPGVRNYGFWDKDKSRYDVFCFTSNFNGRFYYLIHPTKLTYDEAVQACLNDGAQIAKVGQIFAAWKLLGYDRCDAGWLADGSVRYPISRPRRRCSPTEAAVRFVGFPDKKHKLYGVYCFRAYN.

The propeptide occupies 1-9 (MRSLLFLVL). The region spanning 38–152 (PRLLVEAEQA…EGLEDDTAVV (115 aa)) is the Ig-like V-type domain. N-linked (GlcNAc...) asparagine glycosylation is present at asparagine 56. 5 disulfides stabilise this stretch: cysteine 61–cysteine 139, cysteine 181–cysteine 252, cysteine 205–cysteine 226, cysteine 279–cysteine 349, and cysteine 304–cysteine 325. 2 consecutive Link domains span residues 159–254 (VVFP…FCFT) and 259–351 (GRFY…YCFR).

It belongs to the HAPLN family.

The protein resides in the secreted. It localises to the extracellular space. The protein localises to the extracellular matrix. Functionally, stabilizes the aggregates of proteoglycan monomers with hyaluronic acid in the extracellular cartilage matrix. The protein is Hyaluronan and proteoglycan link protein 1 (Hapln1) of Rattus norvegicus (Rat).